The sequence spans 32 residues: Protamine-3A (32 aa).

The disordered stretch occupies residues 1–32 (PRRRRRSSSRPIRRRRRPRVSRRRRRGGRRRR).

In terms of tissue distribution, testis.

The protein resides in the nucleus. Its subcellular location is the chromosome. Functionally, protamines substitute for histones in the chromatin of sperm during the haploid phase of spermatogenesis. They compact sperm DNA into a highly condensed, stable and inactive complex. In Oncorhynchus mykiss (Rainbow trout), this protein is Protamine-3A.